The following is a 79-amino-acid chain: Conotoxin TsMSGL-2 (79 aa).

The first 24 residues, 1 to 24 (MSGLGIMVLTLLLLVFMATSHQDA), serve as a signal peptide directing secretion. The propeptide occupies 25–46 (GEKQATQRDAVNVRRRRSIAGR). Intrachain disulfides connect Cys-52-Cys-64, Cys-56-Cys-73, and Cys-63-Cys-77. Leu-78 is subject to Leucine amide.

The protein belongs to the conotoxin O3 superfamily. In terms of tissue distribution, expressed by the venom duct.

The protein localises to the secreted. The chain is Conotoxin TsMSGL-2 from Conus tessulatus (Tessellate cone).